The sequence spans 327 residues: Gonadotropin-releasing hormone receptor (327 aa).

Topologically, residues 1–37 (MASASPEQNQNHCSAVNNSNMLMQGNLPTLTLSGKIR) are extracellular. Residue asparagine 17 is glycosylated (N-linked (GlcNAc...) asparagine). Residues 38 to 57 (VTVTFFLFLLSTIFNASFLL) traverse the membrane as a helical segment. The Cytoplasmic portion of the chain corresponds to 58–76 (KLQKWTQKKEKGKKLSRMK). The helical transmembrane segment at 77-96 (VLLKHLTLANLLETLIVMPL) threads the bilayer. The Extracellular segment spans residues 97-114 (DGMWNITVQWYAGEFLCK). A glycan (N-linked (GlcNAc...) asparagine) is linked at asparagine 101. Cysteine 113 and cysteine 195 are disulfide-bonded. The helical transmembrane segment at 115 to 136 (VLSYLKLFSMYAPAFMMVVISL) threads the bilayer. Residues 137–163 (DRSLAITRPLAMKNNGKLGQSMIGLAW) are Cytoplasmic-facing. Residues 164 to 183 (LLSGIFAGPQLYIFRMIHLA) traverse the membrane as a helical segment. Topologically, residues 184–211 (DSSGQTEGFPQCVTHCSFPQWWHQAFYN) are extracellular. Residues 212 to 231 (FFTFSCLFIIPLFITLICNA) form a helical membrane-spanning segment. At 232-280 (KIIFTLTRVLHQDPHELQLNQSKNNIPRARLRTLKMTVAFATSFTVCWT) the chain is on the cytoplasmic side. The helical transmembrane segment at 281-299 (PYYVLGIWYWFDPEMLNRV) threads the bilayer. The Extracellular segment spans residues 300–305 (SDPVNH). A helical membrane pass occupies residues 306–325 (FFFLFALLNPCFDPLIYGYF). Residues 326-327 (SL) lie on the Cytoplasmic side of the membrane.

Belongs to the G-protein coupled receptor 1 family.

Its subcellular location is the cell membrane. Receptor for gonadotropin releasing hormone (GnRH) that mediates the action of GnRH to stimulate the secretion of the gonadotropic hormones luteinizing hormone (LH) and follicle-stimulating hormone (FSH). This receptor mediates its action by association with G-proteins that activate a phosphatidylinositol-calcium second messenger system. In Canis lupus familiaris (Dog), this protein is Gonadotropin-releasing hormone receptor (GNRHR).